Consider the following 505-residue polypeptide: L-amino-acid oxidase (505 aa).

The N-terminal stretch at 1-18 is a signal peptide; sequence MNVFLMFSLLFLAALGSC. A disulfide bond links cysteine 28 and cysteine 191. Residues 61–62, 81–82, arginine 89, and 105–108 each bind FAD; these read MS, EA, and GPMR. Arginine 108 is a binding site for substrate. A glycan (N-linked (GlcNAc...) asparagine) is linked at asparagine 190. Position 241 (histidine 241) interacts with substrate. Valine 279 provides a ligand contact to FAD. Cysteine 349 and cysteine 430 are joined by a disulfide. Asparagine 379 is a glycosylation site (N-linked (GlcNAc...) asparagine). Residue tyrosine 390 coordinates substrate. Residues glutamate 475 and 482-487 each bind FAD; that span reads GWIDST. 482-483 lines the substrate pocket; that stretch reads GW.

It belongs to the flavin monoamine oxidase family. FIG1 subfamily. In terms of assembly, monomer. This is in contrast with most of its orthologs, that are non-covalently linked homodimers. It depends on FAD as a cofactor. Post-translationally, N-glycosylated. In terms of tissue distribution, expressed by the venom gland.

It is found in the secreted. It catalyses the reaction an L-alpha-amino acid + O2 + H2O = a 2-oxocarboxylate + H2O2 + NH4(+). It carries out the reaction L-leucine + O2 + H2O = 4-methyl-2-oxopentanoate + H2O2 + NH4(+). Its function is as follows. Catalyzes an oxidative deamination of predominantly hydrophobic and aromatic L-amino acids, thus producing hydrogen peroxide that may contribute to the diverse toxic effects of this enzyme. Shows activity on L-Leu. Exhibits diverse biological activities, such as hemorrhage, edema, antibacterial and antiparasitic activities, as well as regulation of platelet aggregation. Effects of snake L-amino oxidases on platelets are controversial, since they either induce aggregation or inhibit agonist-induced aggregation. These different effects are probably due to different experimental conditions. This protein has an ability to induce hemolysis and apoptosis. This Protobothrops flavoviridis (Habu) protein is L-amino-acid oxidase.